The sequence spans 417 residues: Serine hydroxymethyltransferase (417 aa).

(6S)-5,6,7,8-tetrahydrofolate-binding positions include leucine 120 and 124 to 126 (GHL). Lysine 229 carries the N6-(pyridoxal phosphate)lysine modification. Residue 354-356 (SPF) coordinates (6S)-5,6,7,8-tetrahydrofolate.

Belongs to the SHMT family. As to quaternary structure, homodimer. Pyridoxal 5'-phosphate serves as cofactor.

Its subcellular location is the cytoplasm. It catalyses the reaction (6R)-5,10-methylene-5,6,7,8-tetrahydrofolate + glycine + H2O = (6S)-5,6,7,8-tetrahydrofolate + L-serine. It participates in one-carbon metabolism; tetrahydrofolate interconversion. It functions in the pathway amino-acid biosynthesis; glycine biosynthesis; glycine from L-serine: step 1/1. Catalyzes the reversible interconversion of serine and glycine with tetrahydrofolate (THF) serving as the one-carbon carrier. This reaction serves as the major source of one-carbon groups required for the biosynthesis of purines, thymidylate, methionine, and other important biomolecules. Also exhibits THF-independent aldolase activity toward beta-hydroxyamino acids, producing glycine and aldehydes, via a retro-aldol mechanism. In Acinetobacter baumannii (strain AB307-0294), this protein is Serine hydroxymethyltransferase.